Here is a 211-residue protein sequence, read N- to C-terminus: Large ribosomal subunit protein eL13 (211 aa).

This sequence belongs to the eukaryotic ribosomal protein eL13 family. In terms of assembly, component of the 60S large ribosomal subunit (LSU).

Its subcellular location is the cytoplasm. Component of the ribosome, a large ribonucleoprotein complex responsible for the synthesis of proteins in the cell. The small ribosomal subunit (SSU) binds messenger RNAs (mRNAs) and translates the encoded message by selecting cognate aminoacyl-transfer RNA (tRNA) molecules. The large subunit (LSU) contains the ribosomal catalytic site termed the peptidyl transferase center (PTC), which catalyzes the formation of peptide bonds, thereby polymerizing the amino acids delivered by tRNAs into a polypeptide chain. The nascent polypeptides leave the ribosome through a tunnel in the LSU and interact with protein factors that function in enzymatic processing, targeting, and the membrane insertion of nascent chains at the exit of the ribosomal tunnel. As part of the LSU, it is probably required for its formation and the maturation of rRNAs. In Danio rerio (Zebrafish), this protein is Large ribosomal subunit protein eL13 (rpl13).